The chain runs to 70 residues: UPF0352 protein PSHAa1818 (70 aa).

It belongs to the UPF0352 family.

This chain is UPF0352 protein PSHAa1818, found in Pseudoalteromonas translucida (strain TAC 125).